A 205-amino-acid chain; its full sequence is MRYTSHAVETLIDEFAKLPGIGRKTAQRLTMFILHEEKEKVESLAQALLDLKNKVSYCSLCQNVTDKEIDPCNICTSVKRDKRVVCVVEAPNDVLAFEKTNQYNGLYHVLHGVISPLDGVGPDDLKVKELIHRLSETDPETSIKEVILAINPTVEGETTVLYLSKLLKPLGVKVTRIARGIPIGTELEYIDDATLTRALEGRSEL.

Residues 58 to 75 form a C4-type zinc finger; the sequence is CSLCQNVTDKEIDPCNIC. The Toprim domain occupies 83–182; the sequence is RVVCVVEAPN…KVTRIARGIP (100 aa).

Belongs to the RecR family.

Its function is as follows. May play a role in DNA repair. It seems to be involved in an RecBC-independent recombinational process of DNA repair. It may act with RecF and RecO. This Chloroherpeton thalassium (strain ATCC 35110 / GB-78) protein is Recombination protein RecR.